The sequence spans 472 residues: Argininosuccinate lyase (472 aa).

The protein belongs to the lyase 1 family. Argininosuccinate lyase subfamily.

Its subcellular location is the cytoplasm. It catalyses the reaction 2-(N(omega)-L-arginino)succinate = fumarate + L-arginine. It functions in the pathway amino-acid biosynthesis; L-arginine biosynthesis; L-arginine from L-ornithine and carbamoyl phosphate: step 3/3. The sequence is that of Argininosuccinate lyase from Synechococcus sp. (strain CC9311).